We begin with the raw amino-acid sequence, 101 residues long: Protein Tat (101 aa).

Residues Met-1–Thr-20 form a disordered region. The interval Met-1–Lys-24 is interaction with human CREBBP. The segment at Met-1–Gly-48 is transactivation. The Zn(2+) site is built by Cys-22, Cys-25, and Cys-27. Residues Cys-22–Cys-37 are cysteine-rich. Lys-28 bears the N6-acetyllysine; by host PCAF mark. Zn(2+) contacts are provided by Cys-30, His-33, Cys-34, and Cys-37. The tract at residues Phe-38 to Gly-48 is core. The segment at Tyr-47–Asp-101 is disordered. Over residues Gly-48–Thr-58 the composition is skewed to basic residues. The short motif at Arg-49–Arg-57 is the Nuclear localization signal, RNA-binding (TAR), and protein transduction element. An interaction with the host capping enzyme RNGTT region spans residues Arg-49–Glu-86. Residues Lys-50 and Lys-51 each carry the N6-acetyllysine; by host EP300 and GCN5L2 modification. Arg-52 and Arg-53 each carry asymmetric dimethylarginine; by host PRMT6. A Glycyl lysine isopeptide (Lys-Gly) (interchain with G-Cter in ubiquitin) cross-link involves residue Lys-71. Residues Arg-78 to Asp-80 carry the Cell attachment site motif. Residues Gly-79–Asp-101 are compositionally biased toward basic and acidic residues.

The protein belongs to the lentiviruses Tat family. In terms of assembly, interacts with host CCNT1. Associates with the P-TEFb complex composed at least of Tat, P-TEFb (CDK9 and CCNT1), TAR RNA, RNA Pol II. Recruits the HATs CREBBP, TAF1/TFIID, EP300, PCAF and GCN5L2. Interacts with host KAT5/Tip60; this interaction targets the latter to degradation. Interacts with the host deacetylase SIRT1. Interacts with host capping enzyme RNGTT; this interaction stimulates RNGTT. Binds to host KDR, and to the host integrins ITGAV/ITGB3 and ITGA5/ITGB1. Interacts with host KPNB1/importin beta-1 without previous binding to KPNA1/importin alpha-1. Interacts with EIF2AK2. Interacts with host nucleosome assembly protein NAP1L1; this interaction may be required for the transport of Tat within the nucleus, since the two proteins interact at the nuclear rim. Interacts with host C1QBP/SF2P32; this interaction involves lysine-acetylated Tat. Interacts with the host chemokine receptors CCR2, CCR3 and CXCR4. Interacts with host DPP4/CD26; this interaction may trigger an anti-proliferative effect. Interacts with host LDLR. Interacts with the host extracellular matrix metalloproteinase MMP1. Interacts with host PRMT6; this interaction mediates Tat's methylation. Interacts with, and is ubiquitinated by MDM2/Hdm2. Interacts with host PSMC3 and HTATIP2. Interacts with STAB1; this interaction may overcome SATB1-mediated repression of IL2 and IL2RA (interleukin) in T cells by binding to the same domain than HDAC1. Interacts (when acetylated) with human CDK13, thereby increasing HIV-1 mRNA splicing and promoting the production of the doubly spliced HIV-1 protein Nef. Interacts with host TBP; this interaction modulates the activity of transcriptional pre-initiation complex. Interacts with host RELA. Interacts with host PLSCR1; this interaction negatively regulates Tat transactivation activity by altering its subcellular distribution. In terms of processing, asymmetrical arginine methylation by host PRMT6 seems to diminish the transactivation capacity of Tat and affects the interaction with host CCNT1. Acetylation by EP300, CREBBP, GCN5L2/GCN5 and PCAF regulates the transactivation activity of Tat. EP300-mediated acetylation of Lys-50 promotes dissociation of Tat from the TAR RNA through the competitive binding to PCAF's bromodomain. In addition, the non-acetylated Tat's N-terminus can also interact with PCAF. PCAF-mediated acetylation of Lys-28 enhances Tat's binding to CCNT1. Lys-50 is deacetylated by SIRT1. Post-translationally, polyubiquitination by host MDM2 does not target Tat to degradation, but activates its transactivation function and fosters interaction with CCNT1 and TAR RNA. In terms of processing, phosphorylated by EIF2AK2 on serine and threonine residues adjacent to the basic region important for TAR RNA binding and function. Phosphorylation of Tat by EIF2AK2 is dependent on the prior activation of EIF2AK2 by dsRNA.

It is found in the host nucleus. Its subcellular location is the host nucleolus. The protein resides in the host cytoplasm. It localises to the secreted. Its function is as follows. Transcriptional activator that increases RNA Pol II processivity, thereby increasing the level of full-length viral transcripts. Recognizes a hairpin structure at the 5'-LTR of the nascent viral mRNAs referred to as the transactivation responsive RNA element (TAR) and recruits the cyclin T1-CDK9 complex (P-TEFb complex) that will in turn hyperphosphorylate the RNA polymerase II to allow efficient elongation. The CDK9 component of P-TEFb and other Tat-activated kinases hyperphosphorylate the C-terminus of RNA Pol II that becomes stabilized and much more processive. Other factors such as HTATSF1/Tat-SF1, SUPT5H/SPT5, and HTATIP2 are also important for Tat's function. Besides its effect on RNA Pol II processivity, Tat induces chromatin remodeling of proviral genes by recruiting the histone acetyltransferases (HATs) CREBBP, EP300 and PCAF to the chromatin. This also contributes to the increase in proviral transcription rate, especially when the provirus integrates in transcriptionally silent region of the host genome. To ensure maximal activation of the LTR, Tat mediates nuclear translocation of NF-kappa-B by interacting with host RELA. Through its interaction with host TBP, Tat may also modulate transcription initiation. Tat can reactivate a latently infected cell by penetrating in it and transactivating its LTR promoter. In the cytoplasm, Tat is thought to act as a translational activator of HIV-1 mRNAs. In terms of biological role, extracellular circulating Tat can be endocytosed by surrounding uninfected cells via the binding to several surface receptors such as CD26, CXCR4, heparan sulfate proteoglycans (HSPG) or LDLR. Neurons are rarely infected, but they internalize Tat via their LDLR. Through its interaction with nuclear HATs, Tat is potentially able to control the acetylation-dependent cellular gene expression. Modulates the expression of many cellular genes involved in cell survival, proliferation or in coding for cytokines or cytokine receptors. Tat plays a role in T-cell and neurons apoptosis. Tat induced neurotoxicity and apoptosis probably contribute to neuroAIDS. Circulating Tat also acts as a chemokine-like and/or growth factor-like molecule that binds to specific receptors on the surface of the cells, affecting many cellular pathways. In the vascular system, Tat binds to ITGAV/ITGB3 and ITGA5/ITGB1 integrins dimers at the surface of endothelial cells and competes with bFGF for heparin-binding sites, leading to an excess of soluble bFGF. This is Protein Tat from Homo sapiens (Human).